The chain runs to 277 residues: NH(3)-dependent NAD(+) synthetase (277 aa).

36–43 (GLSGGIDS) is a binding site for ATP. Asp42 serves as a coordination point for Mg(2+). Arg118 lines the deamido-NAD(+) pocket. Thr138 contacts ATP. Mg(2+) is bound at residue Glu143. Positions 167 and 189 each coordinate ATP.

Belongs to the NAD synthetase family. In terms of assembly, homodimer.

The enzyme catalyses deamido-NAD(+) + NH4(+) + ATP = AMP + diphosphate + NAD(+) + H(+). The protein operates within cofactor biosynthesis; NAD(+) biosynthesis; NAD(+) from deamido-NAD(+) (ammonia route): step 1/1. Catalyzes the ATP-dependent amidation of deamido-NAD to form NAD. Uses ammonia as a nitrogen source. The polypeptide is NH(3)-dependent NAD(+) synthetase (Pelodictyon phaeoclathratiforme (strain DSM 5477 / BU-1)).